We begin with the raw amino-acid sequence, 142 residues long: MLLVVADVILTSLYLSSSGDFKYESLKLLGKFETCCIDVSTTIGRCLPPFRSSHCFTFSSWALGVPVRTMSNSRVVPLTKKLNGLHSLLSFIPRLEKLHVPLTVSNMSLEMGSPLIIIKRVYNPLSSRLGAAIINFNSSRSI.

This is an uncharacterized protein from Gallid herpesvirus 2 (strain GA) (GaHV-2).